We begin with the raw amino-acid sequence, 109 residues long: Biphenyl dioxygenase system ferredoxin subunit (109 aa).

The Rieske domain occupies 4 to 100; the sequence is TRVCDRRDVP…IRIEDNDVLV (97 aa). [2Fe-2S] cluster is bound by residues Cys-43, His-45, Cys-63, and His-66.

This sequence belongs to the bacterial ring-hydroxylating dioxygenase ferredoxin component family. This dioxygenase system consists of four proteins: the two subunits of the hydroxylase component (BphA and BphE), a ferredoxin (BphF) and a ferredoxin reductase (BphG).

Functionally, this protein seems to be a 2Fe-2S ferredoxin. In Paraburkholderia xenovorans (strain LB400), this protein is Biphenyl dioxygenase system ferredoxin subunit (bphF).